Consider the following 1320-residue polypeptide: Mediator of RNA polymerase II transcription subunit 15 (1320 aa).

The span at 235–244 shows a compositional bias: polar residues; that stretch reads QQASLNQLTP. Disordered stretches follow at residues 235–283, 372–398, 540–688, 702–791, and 1233–1270; these read QQAS…KPQQ, KNMM…PQQA, QLQQ…QQQT, QTQQ…PTEQ, and DSSS…DSKK. Low complexity-rich tracts occupy residues 245-283, 375-398, and 540-554; these read QQRA…KPQQ, MAQQ…PQQA, and QLQQ…HTQL. A compositionally biased stretch (polar residues) spans 555–587; that stretch reads ADSFSQRQFTSPTLAKPSANVSTIAQQQTQPTA. Composition is skewed to low complexity over residues 588 to 624, 634 to 688, and 702 to 780; these read LSQS…QQQQ, QQQT…QQQT, and QTQQ…PQQT.

Belongs to the Mediator complex subunit 15 family. As to quaternary structure, component of the Mediator complex.

Its subcellular location is the nucleus. Functionally, component of the Mediator complex, a coactivator involved in regulated gene transcription of nearly all RNA polymerase II-dependent genes. Mediator functions as a bridge to convey information from gene-specific regulatory proteins to the basal RNA polymerase II transcription machinery. Mediator is recruited to promoters by direct interactions with regulatory proteins and serves as a scaffold for the assembly of a functional preinitiation complex with RNA polymerase II and the general transcription factors. The chain is Mediator of RNA polymerase II transcription subunit 15 (GAL11) from Eremothecium gossypii (strain ATCC 10895 / CBS 109.51 / FGSC 9923 / NRRL Y-1056) (Yeast).